The chain runs to 310 residues: Mitogen-activated protein kinase kinase 9 (310 aa).

The Protein kinase domain occupies 47–306 (LEKLNVLGCG…APQLLAHPFL (260 aa)). Residues 53 to 61 (LGCGNGGIV) and Lys-76 contribute to the ATP site. Asp-167 serves as the catalytic Proton acceptor. A phosphoserine mark is found at Ser-195 and Ser-201. Position 205 is a phosphothreonine (Thr-205).

It belongs to the protein kinase superfamily. STE Ser/Thr protein kinase family. MAP kinase kinase subfamily. Post-translationally, phosphorylation at Ser-195 and Ser-201 by MAP kinase kinase kinases positively regulates kinase activity. Autophosphorylated.

The protein resides in the cytoplasm. It localises to the nucleus. The enzyme catalyses L-seryl-[protein] + ATP = O-phospho-L-seryl-[protein] + ADP + H(+). It carries out the reaction L-threonyl-[protein] + ATP = O-phospho-L-threonyl-[protein] + ADP + H(+). The catalysed reaction is L-tyrosyl-[protein] + ATP = O-phospho-L-tyrosyl-[protein] + ADP + H(+). In terms of biological role, MKK9-MPK3/MPK6 module phosphorylates and activates EIN3, leading to the promotion of EIN3-mediated transcription in ethylene signaling. Autophosphorylates and also phosphorylates MPK3 and MPK6. Plays an important role in ethylene and camalexin biosynthesis and in salt stress response. MKK9-MPK6 module positively regulates leaf senescence. The sequence is that of Mitogen-activated protein kinase kinase 9 (MKK9) from Arabidopsis thaliana (Mouse-ear cress).